We begin with the raw amino-acid sequence, 476 residues long: MNSIARLSDEINKAILATPLDDDEADKEKLANARGRASSATLRHYNRRRSSYSASSLSSLSSKPTEKEVPTRNEKPKHANIMRVVVYWIRVFLKRIYTFFVHSARVFLYHFLNEEKEFTLASFFWGLCRFVFFPVLLSYKRREMLPPQPSVRRPRFYSSYSYPSSHQDPAYSSFKRHRSSNSYSSSSNGNHVRFQPSIAEEEISFNSFSNSLNSEEDVCVSPMKPKEVSLMGKANSNRSGHSHQPQSTQFSPPANDNISKLPSSFTIVNDPLKSPSSSRLRIRNITLCADKIPRPLLNSKLPRKTLVLDLDETLIHSVSRGSRTTSGQPIEVHVPGEHPILYYIHKRPHLDYFLSNVSQWFRLILFTASVQPYADPIIDYLERDKKIFAKRYYRQHCALVDSSFVKDISICNIHLSRIMIIDNSPASYNAHKENAIPIEGWISDPSDVDLLNLLSFLHALQYVHDVRDLLGLRLAK.

The tract at residues 47-74 (RRRSSYSASSLSSLSSKPTEKEVPTRNE) is disordered. A compositionally biased stretch (low complexity) spans 51–62 (SYSASSLSSLSS). Positions 64 to 74 (PTEKEVPTRNE) are enriched in basic and acidic residues. Residues 123 to 139 (FFWGLCRFVFFPVLLSY) form a helical membrane-spanning segment. Disordered stretches follow at residues 164-190 (SSHQ…SNGN) and 232-256 (GKAN…PAND). Over residues 234–256 (ANSNRSGHSHQPQSTQFSPPAND) the composition is skewed to polar residues. Residues N237, N257, N284, and N356 are each glycosylated (N-linked (GlcNAc...) asparagine). In terms of domain architecture, FCP1 homology spans 299-460 (SKLPRKTLVL…LNLLSFLHAL (162 aa)).

It belongs to the Dullard family. Component of the nem1-spo7 complex.

The protein resides in the endoplasmic reticulum membrane. Its subcellular location is the nucleus membrane. The catalysed reaction is O-phospho-L-seryl-[protein] + H2O = L-seryl-[protein] + phosphate. It catalyses the reaction O-phospho-L-threonyl-[protein] + H2O = L-threonyl-[protein] + phosphate. Functionally, catalytic component of the nem1-spo7 complex which acts as a phosphatase and may be required for proper nuclear membrane morphology. This chain is Nuclear envelope morphology protein 1 (nem1), found in Schizosaccharomyces pombe (strain 972 / ATCC 24843) (Fission yeast).